The chain runs to 311 residues: Urease accessory protein UreD (311 aa).

The protein belongs to the UreD family. UreD, UreF and UreG form a complex that acts as a GTP-hydrolysis-dependent molecular chaperone, activating the urease apoprotein by helping to assemble the nickel containing metallocenter of UreC. The UreE protein probably delivers the nickel.

It localises to the cytoplasm. In terms of biological role, required for maturation of urease via the functional incorporation of the urease nickel metallocenter. This is Urease accessory protein UreD from Synechococcus sp. (strain CC9605).